We begin with the raw amino-acid sequence, 316 residues long: 4-hydroxy-3-methylbut-2-enyl diphosphate reductase (316 aa).

Residue cysteine 12 coordinates [4Fe-4S] cluster. Residues histidine 41 and histidine 74 each contribute to the (2E)-4-hydroxy-3-methylbut-2-enyl diphosphate site. Histidine 41 and histidine 74 together coordinate dimethylallyl diphosphate. The isopentenyl diphosphate site is built by histidine 41 and histidine 74. Cysteine 96 is a binding site for [4Fe-4S] cluster. Histidine 124 is a binding site for (2E)-4-hydroxy-3-methylbut-2-enyl diphosphate. Histidine 124 contributes to the dimethylallyl diphosphate binding site. An isopentenyl diphosphate-binding site is contributed by histidine 124. Glutamate 126 serves as the catalytic Proton donor. Threonine 167 contacts (2E)-4-hydroxy-3-methylbut-2-enyl diphosphate. Cysteine 197 provides a ligand contact to [4Fe-4S] cluster. The (2E)-4-hydroxy-3-methylbut-2-enyl diphosphate site is built by serine 225, serine 226, asparagine 227, and serine 269. Dimethylallyl diphosphate is bound by residues serine 225, serine 226, asparagine 227, and serine 269. 4 residues coordinate isopentenyl diphosphate: serine 225, serine 226, asparagine 227, and serine 269.

This sequence belongs to the IspH family. Homodimer. [4Fe-4S] cluster is required as a cofactor.

It catalyses the reaction isopentenyl diphosphate + 2 oxidized [2Fe-2S]-[ferredoxin] + H2O = (2E)-4-hydroxy-3-methylbut-2-enyl diphosphate + 2 reduced [2Fe-2S]-[ferredoxin] + 2 H(+). The enzyme catalyses dimethylallyl diphosphate + 2 oxidized [2Fe-2S]-[ferredoxin] + H2O = (2E)-4-hydroxy-3-methylbut-2-enyl diphosphate + 2 reduced [2Fe-2S]-[ferredoxin] + 2 H(+). It participates in isoprenoid biosynthesis; dimethylallyl diphosphate biosynthesis; dimethylallyl diphosphate from (2E)-4-hydroxy-3-methylbutenyl diphosphate: step 1/1. The protein operates within isoprenoid biosynthesis; isopentenyl diphosphate biosynthesis via DXP pathway; isopentenyl diphosphate from 1-deoxy-D-xylulose 5-phosphate: step 6/6. Functionally, catalyzes the conversion of 1-hydroxy-2-methyl-2-(E)-butenyl 4-diphosphate (HMBPP) into a mixture of isopentenyl diphosphate (IPP) and dimethylallyl diphosphate (DMAPP). Acts in the terminal step of the DOXP/MEP pathway for isoprenoid precursor biosynthesis. The chain is 4-hydroxy-3-methylbut-2-enyl diphosphate reductase from Cronobacter sakazakii (strain ATCC BAA-894) (Enterobacter sakazakii).